Here is a 424-residue protein sequence, read N- to C-terminus: Mitogen-activated protein kinase mpkA (424 aa).

Positions 23-314 constitute a Protein kinase domain; it reads YNVTKELGQG…VEEALEHPYL (292 aa). ATP contacts are provided by residues 29–37 and Lys-52; that span reads LGQGAYGIV. The segment at 375-424 is disordered; that stretch reads QQIAQQTNVPIPDHQQGGWKQEEPKPQEVHAAGGHVNDLESSLQRGMDVQ.

It belongs to the protein kinase superfamily. Ser/Thr protein kinase family. In terms of assembly, interacts with flbB, flbC, brlA, and rasB. Interacts with fmqA and fmqC. Interacts with hsp90. Mg(2+) serves as cofactor. In terms of processing, phosphorylated by the upstreamm MAPKK mkk2. Phosphorylation is induced during asexual development. Phosphorylation is regulated by rlmA.

The enzyme catalyses L-seryl-[protein] + ATP = O-phospho-L-seryl-[protein] + ADP + H(+). The catalysed reaction is L-threonyl-[protein] + ATP = O-phospho-L-threonyl-[protein] + ADP + H(+). With respect to regulation, activated by threonine and tyrosine phosphorylation by the upstreamm MAPKK mkk2. Its function is as follows. Mitogen-activated protein kinase; part of cell wall integrity (CWI) signaling pathway composed of pkcA, the bck1-mkk2-mpka MAPK cascade and the downstream rlmA transcription regulator. The CWI signaling pathway regulates cell wall integrity and pyomelanin formation. CWI also controls oxidative stress response, gliotoxin production, iron adaptation and asexual development. Finally, CWI is constitutively required for A.fumigatus to cope with the temperature increase found in the mammalian lung environment, during infection. MpkA positively modulates the expression of fumiquinazoline cluster during conidiogenesis and directly phosphorylates fmqC, and perhaps also fmqA. The chain is Mitogen-activated protein kinase mpkA from Aspergillus fumigatus (strain ATCC MYA-4609 / CBS 101355 / FGSC A1100 / Af293) (Neosartorya fumigata).